The following is a 297-amino-acid chain: Phosphatidylinositol N-acetylglucosaminyltransferase subunit C (297 aa).

The next 4 membrane-spanning stretches (helical) occupy residues 67–87 (VFVV…WLFG), 88–108 (TGLA…GGEG), 153–173 (AVFM…AAIV), and 239–259 (ALGG…LLLI).

It belongs to the PIGC family. Component of the glycosylphosphatidylinositol-N-acetylglucosaminyltransferase (GPI-GnT) complex composed at least by PIGA, PIGC, PIGH, PIGP, PIGQ, PIGY and DPM2. Interacts with PIGQ. Interacts with the heterodimer PIGA:PIGH.

Its subcellular location is the endoplasmic reticulum membrane. The protein operates within glycolipid biosynthesis; glycosylphosphatidylinositol-anchor biosynthesis. Part of the glycosylphosphatidylinositol-N-acetylglucosaminyltransferase (GPI-GnT) complex that catalyzes the transfer of N-acetylglucosamine from UDP-N-acetylglucosamine to phosphatidylinositol and participates in the first step of GPI biosynthesis. This Bos taurus (Bovine) protein is Phosphatidylinositol N-acetylglucosaminyltransferase subunit C.